We begin with the raw amino-acid sequence, 499 residues long: MAMSDKKDVVLIGAGVLSTTFGSMLKTIAPDWDIHLYERLDRPGIESSNERNNAGTGHAALCELNYTVQQPDGSIDIEKAKEINEQFEISKQFWGHLVKSGEIQNPKEFINPLPHISFVRGKNNVKFLKDRYEAMKQFPMFDNIEYTEDIEEMRKWIPLMMKGREDKGYMAASKIDEGTDVNYGELTRKMAQNLKNSPNVEVQYKHEVVDFERLSNGKWSVKIKNLNNGQVFEHQTDYVFIGAGGGAIPLLQKTGIPESKHLGGFPISGQFIACTNPQVIEQHDAKVYGKEPPGTPPMTVPHLDTRYIDGERTLLFGPFANVGPKFLKHGSNLDLFKSIKPYNITTLLASAVKNLPLIKYSFDQVIMTKEGCMNHLRTFYPEARDEDWQVYTAGKRVQVIKDTEENGKGFIQFGTEVVNSEDHSVIALLGESPGASTSVSVALEVLEKNFPEYAKDWEPKIKKMIPSYGESLIDDVQLMRKIRKQTSKDLELGFYNKAK.

It belongs to the MQO family. Requires FAD as cofactor.

It carries out the reaction (S)-malate + a quinone = a quinol + oxaloacetate. The protein operates within carbohydrate metabolism; tricarboxylic acid cycle; oxaloacetate from (S)-malate (quinone route): step 1/1. This chain is Probable malate:quinone oxidoreductase 4, found in Staphylococcus epidermidis (strain ATCC 12228 / FDA PCI 1200).